The chain runs to 334 residues: Cytochrome c biogenesis protein CcsA (334 aa).

The next 8 helical transmembrane spans lie at 12 to 32 (NTAFLVLLLTMFAYWVAVVFP), 35 to 55 (WLVQGASGAMAIANLTITALL), 67 to 87 (ISNLYESLFFLAWGITAVHFI), 96 to 116 (FVGAVTSPIALGIVAFAALTL), 141 to 161 (VMMVSYATLMVGSLLAIAFLF), 242 to 262 (IIGLGFPLLTIGIIAGAVWAN), 277 to 297 (WALITWLVFAAYLHARITKGW), and 303 to 323 (AILAASGFTVVWICYLGVNLL).

The protein belongs to the CcmF/CycK/Ccl1/NrfE/CcsA family. In terms of assembly, may interact with ccs1.

The protein localises to the cellular thylakoid membrane. Functionally, required during biogenesis of c-type cytochromes (cytochrome c6 and cytochrome f) at the step of heme attachment. This chain is Cytochrome c biogenesis protein CcsA, found in Synechocystis sp. (strain ATCC 27184 / PCC 6803 / Kazusa).